We begin with the raw amino-acid sequence, 134 residues long: MAKGHTSRSYSQRYAKWQAKFNAFSNPTVASTILSNVSPVAQQNFQTNVPKFTSVNENVSAVLTQYGITGPNRAIYQGFGLKVARALNRIGSGPALVNMINGLKGYYISAFNANPQVLDAVVNIITGSPTGYVS.

Homodimer.

The protein resides in the virion. Its function is as follows. Self-assembles to form a helical, filamentous nucleocapsid. The capsid proteins wrap around the DNA and maintain it in an A-form by non-specific desolvation and specific coordination of the DNA phosphate groups by positively charged residues. This certainly protects the viral DNA under conditions such as the extreme desiccation of its host. In Saccharolobus islandicus (Sulfolobus islandicus), this protein is Major capsid protein.